Consider the following 598-residue polypeptide: Sulfoacetaldehyde acetyltransferase (598 aa).

Belongs to the TPP enzyme family. In terms of assembly, homotetramer. It depends on Mg(2+) as a cofactor. Thiamine diphosphate serves as cofactor.

It is found in the cytoplasm. It carries out the reaction acetyl phosphate + sulfite + H(+) = sulfoacetaldehyde + phosphate. It participates in organosulfur degradation; taurine degradation via aerobic pathway; acetyl phosphate and sulfite from taurine: step 2/2. In Castellaniella defragrans (Alcaligenes defragrans), this protein is Sulfoacetaldehyde acetyltransferase.